We begin with the raw amino-acid sequence, 506 residues long: uncharacterized protein (506 aa).

The protein belongs to the Mg-chelatase subunits D/I family. ComM subfamily.

This is an uncharacterized protein from Salmonella typhimurium (strain LT2 / SGSC1412 / ATCC 700720).